The primary structure comprises 299 residues: Deoxyribonuclease-1-like 2 (299 aa).

A signal peptide spans Met1 to Ala20. Active-site residues include Glu99 and His170. Cys209 and Cys245 form a disulfide bridge.

It belongs to the DNase I family. The cofactor is Mg(2+). Ca(2+) serves as cofactor. As to expression, preferentially expressed in the skin and up-regulated during keratinocytes differentiation. Highly abundant (at protein level) in the stratum granulosum.

Its subcellular location is the cytoplasm. It localises to the secreted. Functionally, divalent cation-dependent acid DNA endonuclease involved in the breakdown of the nucleus during corneocyte formation of epidermal keratinocytes. May play an immune role by eliminating harmful DNA released into the extracellular environment by damaged epidermal cells. The sequence is that of Deoxyribonuclease-1-like 2 (DNASE1L2) from Homo sapiens (Human).